The primary structure comprises 89 residues: Nitrogen regulatory protein (89 aa).

The PTS EIIA type-2 domain occupies 6-89 (TILTPGRSLV…ALLHLEAPID (84 aa)). Residue His-68 is the Tele-phosphohistidine intermediate of the active site.

The protein resides in the cytoplasm. Functionally, seems to have a role in regulating nitrogen assimilation. The protein is Nitrogen regulatory protein (ptsN) of Pseudomonas putida (Arthrobacter siderocapsulatus).